A 480-amino-acid polypeptide reads, in one-letter code: Oxysterol-binding protein-related protein 2 (480 aa).

The interval 1-60 (MNGEEEFFDAVTGFDSDNSSGEFSEANQKVTGMIDLDTSKNNRIGKTGERPSQENGIQKH) is disordered. The span at 15-30 (DSDNSSGEFSEANQKV) shows a compositional bias: polar residues. A phosphoserine mark is found at Ser-19 and Ser-20. A 1,2-diacyl-sn-glycero-3-phospho-(1D-myo-inositol-4,5-bisphosphate)-binding positions include Lys-90, 178 to 179 (HH), and 427 to 431 (EEKQR).

Belongs to the OSBP family. As to quaternary structure, monomer. Homotetramer; phosphatidylinositol-4,5-bisphosphate binding promotes formation of stable tetramers. Interacts with DIAPH1. As to expression, widely expressed.

The protein resides in the cytoplasm. Its subcellular location is the cytosol. It localises to the lipid droplet. The protein localises to the cell membrane. Its function is as follows. Intracellular transport protein that binds sterols and phospholipids and mediates lipid transport between intracellular compartments. Increases plasma membrane cholesterol levels and decreases phosphatidylinositol-4,5-bisphosphate levels in the cell membrane. Binds phosphoinositides, such as phosphatidylinositol-4,5-bisphosphate. Exhibits strong binding to phosphatidic acid and weak binding to phosphatidylinositol 3-phosphate. Binds cholesterol, dehydroergosterol, 22(R)-hydroxycholesterol and 25-hydroxycholesterol (in vitro). The polypeptide is Oxysterol-binding protein-related protein 2 (OSBPL2) (Homo sapiens (Human)).